The sequence spans 126 residues: Fluoride-specific ion channel FluC (126 aa).

The next 4 membrane-spanning stretches (helical) occupy residues Pro-4–Leu-24, Ile-33–Ala-53, Phe-67–Val-87, and Met-97–Leu-117. The Na(+) site is built by Gly-74 and Thr-77.

The protein belongs to the fluoride channel Fluc/FEX (TC 1.A.43) family.

The protein localises to the cell inner membrane. The catalysed reaction is fluoride(in) = fluoride(out). Its activity is regulated as follows. Na(+) is not transported, but it plays an essential structural role and its presence is essential for fluoride channel function. In terms of biological role, fluoride-specific ion channel. Important for reducing fluoride concentration in the cell, thus reducing its toxicity. In Acinetobacter baumannii (strain ATCC 17978 / DSM 105126 / CIP 53.77 / LMG 1025 / NCDC KC755 / 5377), this protein is Fluoride-specific ion channel FluC.